Consider the following 149-residue polypeptide: Calmodulin-1 (149 aa).

Ala-2 carries the post-translational modification N-acetylalanine. EF-hand domains are found at residues Asp-8–Asn-43, Pro-44–Asp-79, Asp-81–Lys-116, and Leu-117–Lys-149. The Ca(2+) site is built by Asp-21, Asp-23, Asp-25, Cys-27, Glu-32, Asp-57, Asp-59, Asn-61, Thr-63, Glu-68, Asp-94, Asp-96, Asn-98, and Glu-105. Lys-116 carries the N6,N6,N6-trimethyllysine modification. Ca(2+) contacts are provided by Asp-130, Asp-132, Asp-134, Gln-136, and Glu-141.

This sequence belongs to the calmodulin family.

Calmodulin mediates the control of a large number of enzymes, ion channels and other proteins by Ca(2+). Among the enzymes to be stimulated by the calmodulin-Ca(2+) complex are a number of protein kinases and phosphatases. The polypeptide is Calmodulin-1 (CAM81) (Petunia hybrida (Petunia)).